We begin with the raw amino-acid sequence, 156 residues long: 6,7-dimethyl-8-ribityllumazine synthase (156 aa).

5-amino-6-(D-ribitylamino)uracil-binding positions include F22, 57-59 (AYE), and 81-83 (TVI). 86–87 (GT) provides a ligand contact to (2S)-2-hydroxy-3-oxobutyl phosphate. The active-site Proton donor is H89. Position 114 (F114) interacts with 5-amino-6-(D-ribitylamino)uracil. R128 is a (2S)-2-hydroxy-3-oxobutyl phosphate binding site.

The protein belongs to the DMRL synthase family. In terms of assembly, forms an icosahedral capsid composed of 60 subunits, arranged as a dodecamer of pentamers.

The enzyme catalyses (2S)-2-hydroxy-3-oxobutyl phosphate + 5-amino-6-(D-ribitylamino)uracil = 6,7-dimethyl-8-(1-D-ribityl)lumazine + phosphate + 2 H2O + H(+). Its pathway is cofactor biosynthesis; riboflavin biosynthesis; riboflavin from 2-hydroxy-3-oxobutyl phosphate and 5-amino-6-(D-ribitylamino)uracil: step 1/2. In terms of biological role, catalyzes the formation of 6,7-dimethyl-8-ribityllumazine by condensation of 5-amino-6-(D-ribitylamino)uracil with 3,4-dihydroxy-2-butanone 4-phosphate. This is the penultimate step in the biosynthesis of riboflavin. The protein is 6,7-dimethyl-8-ribityllumazine synthase of Salmonella heidelberg (strain SL476).